A 260-amino-acid polypeptide reads, in one-letter code: Cytosolic Fe-S cluster assembly factor Nubp2 homolog 1 (260 aa).

14-21 contributes to the ATP binding site; the sequence is GKGGVGKS. [4Fe-4S] cluster contacts are provided by C188 and C191.

This sequence belongs to the Mrp/NBP35 ATP-binding proteins family. NUBP2/CFD1 subfamily. In terms of assembly, heterotetramer of 2 Nubp1 and 2 Nubp2 chains. [4Fe-4S] cluster is required as a cofactor.

The protein resides in the cytoplasm. Functionally, component of the cytosolic iron-sulfur (Fe/S) protein assembly (CIA) machinery. Required for maturation of extramitochondrial Fe-S proteins. The Nubp1-Nubp2 heterotetramer forms a Fe-S scaffold complex, mediating the de novo assembly of an Fe-S cluster and its transfer to target apoproteins. The protein is Cytosolic Fe-S cluster assembly factor Nubp2 homolog 1 of Drosophila yakuba (Fruit fly).